A 266-amino-acid chain; its full sequence is Ras-like protein family member 12 (266 aa).

Residues 27 to 34, 74 to 78, and 134 to 137 each bind GTP; these read GRRGAGKS, DTADL, and NKLD.

This sequence belongs to the small GTPase superfamily. Ras family.

It carries out the reaction GTP + H2O = GDP + phosphate + H(+). This is Ras-like protein family member 12 (Rasl12) from Mus musculus (Mouse).